Consider the following 430-residue polypeptide: Serine--tRNA ligase (430 aa).

235–237 (TAE) is a binding site for L-serine. ATP-binding positions include 266–268 (RRE) and Val-282. Glu-289 lines the L-serine pocket. Position 353–356 (353–356 (EASS)) interacts with ATP. An L-serine-binding site is contributed by Ser-389.

This sequence belongs to the class-II aminoacyl-tRNA synthetase family. Type-1 seryl-tRNA synthetase subfamily. As to quaternary structure, homodimer. The tRNA molecule binds across the dimer.

The protein resides in the cytoplasm. The catalysed reaction is tRNA(Ser) + L-serine + ATP = L-seryl-tRNA(Ser) + AMP + diphosphate + H(+). It catalyses the reaction tRNA(Sec) + L-serine + ATP = L-seryl-tRNA(Sec) + AMP + diphosphate + H(+). Its pathway is aminoacyl-tRNA biosynthesis; selenocysteinyl-tRNA(Sec) biosynthesis; L-seryl-tRNA(Sec) from L-serine and tRNA(Sec): step 1/1. Functionally, catalyzes the attachment of serine to tRNA(Ser). Is also able to aminoacylate tRNA(Sec) with serine, to form the misacylated tRNA L-seryl-tRNA(Sec), which will be further converted into selenocysteinyl-tRNA(Sec). The chain is Serine--tRNA ligase from Chlorobium luteolum (strain DSM 273 / BCRC 81028 / 2530) (Pelodictyon luteolum).